A 469-amino-acid chain; its full sequence is Cysteine--tRNA ligase (469 aa).

Residue C29 participates in Zn(2+) binding. The 'HIGH' region motif lies at 31–41; the sequence is PTVYNYIHIGN. Residues C210, H235, and E239 each contribute to the Zn(2+) site. The 'KMSKS' region motif lies at 267-271; it reads KMSKS. K270 is a binding site for ATP.

Belongs to the class-I aminoacyl-tRNA synthetase family. As to quaternary structure, monomer. Zn(2+) serves as cofactor.

It localises to the cytoplasm. It carries out the reaction tRNA(Cys) + L-cysteine + ATP = L-cysteinyl-tRNA(Cys) + AMP + diphosphate. The polypeptide is Cysteine--tRNA ligase (Thermosipho melanesiensis (strain DSM 12029 / CIP 104789 / BI429)).